Here is a 110-residue protein sequence, read N- to C-terminus: Parvalbumin alpha (110 aa).

Ser-2 carries the N-acetylserine modification. Phosphoserine occurs at positions 2 and 24. EF-hand domains lie at 39 to 74 and 78 to 110; these read KSAD…FSPD and LSAK…VAES. 11 residues coordinate Ca(2+): Asp-52, Asp-54, Ser-56, Phe-58, Glu-60, Glu-63, Asp-91, Asp-93, Asp-95, Lys-97, and Glu-102.

This sequence belongs to the parvalbumin family.

In muscle, parvalbumin is thought to be involved in relaxation after contraction. It binds two calcium ions. The sequence is that of Parvalbumin alpha (PVALB) from Macaca fuscata fuscata (Japanese macaque).